A 389-amino-acid polypeptide reads, in one-letter code: GTPase Obg (389 aa).

Residues 1–159 (MKFVDEAVIK…RELRLELLLL (159 aa)) form the Obg domain. The OBG-type G domain maps to 160-333 (ADVGMLGLPN…LCYKLADFME (174 aa)). GTP-binding positions include 166–173 (GLPNAGKS), 191–195 (FTTLI), 213–216 (DIPG), 283–286 (NKVD), and 314–316 (SAV). Positions 173 and 193 each coordinate Mg(2+). A disordered region spans residues 359-389 (NQGEVITEDDDDDWDDWDDEEDDGHVIYVRE). The span at 364–381 (ITEDDDDDWDDWDDEEDD) shows a compositional bias: acidic residues.

The protein belongs to the TRAFAC class OBG-HflX-like GTPase superfamily. OBG GTPase family. As to quaternary structure, monomer. It depends on Mg(2+) as a cofactor.

Its subcellular location is the cytoplasm. Functionally, an essential GTPase which binds GTP, GDP and possibly (p)ppGpp with moderate affinity, with high nucleotide exchange rates and a fairly low GTP hydrolysis rate. Plays a role in control of the cell cycle, stress response, ribosome biogenesis and in those bacteria that undergo differentiation, in morphogenesis control. The protein is GTPase Obg of Vibrio vulnificus (strain CMCP6).